A 425-amino-acid polypeptide reads, in one-letter code: Pleckstrin homology domain-containing family A member 2 (425 aa).

The 107-residue stretch at 7-113 (QNRICGFLDI…WVEALNQASK (107 aa)) folds into the PH 1 domain. A Glycyl lysine isopeptide (Lys-Gly) (interchain with G-Cter in SUMO2) cross-link involves residue Lys-141. Phosphoserine is present on Ser-184. A PH 2 domain is found at 198–298 (PLIKSGYCVK…WIKEIGAAVQ (101 aa)). Residues 312–330 (SISLTRPGSSSLSSGPNSI) show a composition bias toward low complexity. The tract at residues 312-332 (SISLTRPGSSSLSSGPNSILC) is disordered. Phosphoserine occurs at positions 314 and 349. The segment at 352 to 425 (SSWQPWTPVP…DDENIRTSDV (74 aa)) is disordered. Residues 400–410 (RSEPQHPKEKP) show a composition bias toward basic and acidic residues.

As to quaternary structure, binds MPDZ and PTPN13. In terms of tissue distribution, highly expressed in heart, kidney, spleen and peripheral blood leukocytes. Detected at lower levels in brain, skeletal muscle, colon, thymus, liver, small intestine, placenta and lung.

It is found in the cytoplasm. The protein localises to the cell membrane. It localises to the nucleus. Functionally, binds specifically to phosphatidylinositol 3,4-diphosphate (PtdIns3,4P2), but not to other phosphoinositides. May recruit other proteins to the plasma membrane. The chain is Pleckstrin homology domain-containing family A member 2 (PLEKHA2) from Homo sapiens (Human).